A 156-amino-acid polypeptide reads, in one-letter code: Small ribosomal subunit protein uS7 (156 aa).

Belongs to the universal ribosomal protein uS7 family. Part of the 30S ribosomal subunit. Contacts proteins S9 and S11.

In terms of biological role, one of the primary rRNA binding proteins, it binds directly to 16S rRNA where it nucleates assembly of the head domain of the 30S subunit. Is located at the subunit interface close to the decoding center, probably blocks exit of the E-site tRNA. The polypeptide is Small ribosomal subunit protein uS7 (Dinoroseobacter shibae (strain DSM 16493 / NCIMB 14021 / DFL 12)).